Consider the following 354-residue polypeptide: Guanine nucleotide-binding protein G(o) subunit alpha (354 aa).

The N-myristoyl glycine moiety is linked to residue glycine 2. Cysteine 3 is lipidated: S-palmitoyl cysteine. A G-alpha domain is found at 32 to 354 (KDVKLLLLGA…ANNLRGCGLY (323 aa)). The G1 motif stretch occupies residues 35–48 (KLLLLGAGESGKST). GTP is bound by residues glutamate 43, lysine 46, serine 47, threonine 48, serine 152, leucine 176, arginine 177, threonine 178, and arginine 179. Serine 47 lines the Mg(2+) pocket. Positions 174 to 182 (DILRTRVKT) are G2 motif. Position 182 (threonine 182) interacts with Mg(2+). A G3 motif region spans residues 197 to 206 (FRLFDVGGQR). Glutamine 205 carries the post-translational modification 5-glutamyl histamine. The interval 266–273 (ILFLNKKD) is G4 motif. The GTP site is built by asparagine 270, aspartate 273, and cysteine 325. The tract at residues 324–329 (TCATDT) is G5 motif. Residue cysteine 351 is the site of S-palmitoyl cysteine attachment.

Belongs to the G-alpha family. G(i/o/t/z) subfamily. In terms of assembly, g proteins are composed of 3 units; alpha, beta and gamma. The alpha chain contains the guanine nucleotide binding site. Forms a complex with GNB1 and GNG3. Interacts with RGS14. Interacts with RGS16. Interacts with RGS19. Interacts (when palmitoylated) with ADGRG3. In terms of processing, histaminylated at Gln-205 residues by TGM2.

The protein localises to the cell membrane. The protein resides in the membrane. The catalysed reaction is GTP + H2O = GDP + phosphate + H(+). With respect to regulation, the GTPase activity is promoted by GTPAse activators, such as RGS14, RGS16 and RGS19. Guanine nucleotide-binding proteins (G proteins) function as transducers downstream of G protein-coupled receptors (GPCRs) in numerous signaling cascades. The alpha chain contains the guanine nucleotide binding site and alternates between an active, GTP-bound state and an inactive, GDP-bound state. Signaling by an activated GPCR promotes GDP release and GTP binding. The alpha subunit has a low GTPase activity that converts bound GTP to GDP, thereby terminating the signal. Both GDP release and GTP hydrolysis are modulated by numerous regulatory proteins. Signaling is mediated via effector proteins, such as adenylate cyclase. Inhibits adenylate cyclase activity, leading to decreased intracellular cAMP levels. This is Guanine nucleotide-binding protein G(o) subunit alpha (Gnao1) from Mus musculus (Mouse).